A 720-amino-acid chain; its full sequence is Glycine--tRNA ligase beta subunit (720 aa).

Belongs to the class-II aminoacyl-tRNA synthetase family. In terms of assembly, tetramer of two alpha and two beta subunits.

It is found in the cytoplasm. The enzyme catalyses tRNA(Gly) + glycine + ATP = glycyl-tRNA(Gly) + AMP + diphosphate. The polypeptide is Glycine--tRNA ligase beta subunit (Acidovorax sp. (strain JS42)).